The sequence spans 178 residues: Deoxycytidylate deaminase (178 aa).

The CMP/dCMP-type deaminase domain maps to 14–146 (EWPEYFMAVA…EATAARLLFD (133 aa)). H84 is a binding site for Zn(2+). Residue E86 is the Proton donor of the active site. Zn(2+)-binding residues include C110 and C113. S174 is subject to Phosphoserine.

This sequence belongs to the cytidine and deoxycytidylate deaminase family. Homohexamer. Requires Zn(2+) as cofactor.

It catalyses the reaction dCMP + H2O + H(+) = dUMP + NH4(+). The enzyme catalyses 5-hydroxymethyl-dCMP + H2O + H(+) = 5-hydroxymethyl-dUMP + NH4(+). Its activity is regulated as follows. Allosteric enzyme whose activity is greatly influenced by the end products of its metabolic pathway, dCTP and dTTP. Its function is as follows. Catalyzes the deamination of dCMP to dUMP, providing the nucleoside monophosphate substrate for the thymidylate synthase/TYMS. Also, part of a nucleotide salvage pathway that eliminates epigenetically modified 5-hydroxymethyl-dCMP (hmdCMP) in a two-step process entailing deamination to cytotoxic 5-hydroxymethyl-dUMP (hmdUMP), followed by its hydrolysis into 5-hydroxymethyluracil (hmU) and 2-deoxy-D-ribose 5-phosphate (deoxyribosephosphate). Catalyzes the first step in that pathway, the deamination of 5-hydroxymethyl-dCMP (hmdCMP). The chain is Deoxycytidylate deaminase from Pongo abelii (Sumatran orangutan).